A 392-amino-acid chain; its full sequence is Cytochrome b (392 aa).

4 helical membrane-spanning segments follow: residues 38–58 (FGSL…FLAM), 82–104 (WLLR…LHIF), 119–139 (VRCL…TGYV), and 185–205 (FFSL…LHLA). His-88 and His-102 together coordinate heme b. Positions 189 and 203 each coordinate heme b. His-208 serves as a coordination point for a ubiquinone. 4 consecutive transmembrane segments (helical) span residues 231–251 (FYVK…IWIF), 295–315 (SGGV…PFFK), 327–347 (IHQG…WIGC), and 354–373 (FVTI…AITP).

Belongs to the cytochrome b family. The main subunits of complex b-c1 are: cytochrome b, cytochrome c1 and the Rieske protein. Heme b is required as a cofactor.

It localises to the mitochondrion inner membrane. Its function is as follows. Component of the ubiquinol-cytochrome c reductase complex (complex III or cytochrome b-c1 complex) that is part of the mitochondrial respiratory chain. The b-c1 complex mediates electron transfer from ubiquinol to cytochrome c. Contributes to the generation of a proton gradient across the mitochondrial membrane that is then used for ATP synthesis. In Vicia faba (Broad bean), this protein is Cytochrome b (MT-CYB).